We begin with the raw amino-acid sequence, 391 residues long: Multidrug resistance protein MdtL (391 aa).

Over 1–3 (MSR) the chain is Cytoplasmic. A helical membrane pass occupies residues 4–24 (FLICSFALVLLYPAGIDMYLV). Residues 25–41 (GLPRIAADLNASEAQLH) lie on the Periplasmic side of the membrane. Residues 42 to 62 (IAFSVYLAGMAAAMLFAGKVA) traverse the membrane as a helical segment. The Cytoplasmic segment spans residues 63 to 68 (DRSGRK). Residues 69–89 (PVAIPGAALFIIASVFCSLAE) form a helical membrane-spanning segment. Residues 90–92 (TSA) are Periplasmic-facing. Residues 93–113 (LFLAGRFLQGLGAGCCYVVAF) form a helical membrane-spanning segment. At 114 to 130 (AILRDTLDDRRRAKVLS) the chain is on the cytoplasmic side. Residues 131–151 (LLNGITCIIPVLAPVLGHLIM) traverse the membrane as a helical segment. At 152-157 (LKFPWQ) the chain is on the periplasmic side. A helical membrane pass occupies residues 158-178 (SLFWTMATMGIAVLMLSLFIL). At 179–202 (KETRPAAPAASDKPRENSESLLNR) the chain is on the cytoplasmic side. Residues 203–222 (FFLSRVVITTLSVSVILTFV) traverse the membrane as a helical segment. Topologically, residues 223–244 (NTSPVLLMEIMGFERGEYATIM) are periplasmic. The chain crosses the membrane as a helical span at residues 245–265 (ALTAGVSMTVSFSTPFALGIF). The Cytoplasmic segment spans residues 266-268 (KPR). The helical transmembrane segment at 269–289 (TLMITSQVLFLAAGITLAVSP) threads the bilayer. Topologically, residues 290–292 (SHA) are periplasmic. A helical transmembrane segment spans residues 293-313 (VSLFGITLICAGFSVGFGVAM). Residues 314-330 (SQALGPFSLRAGVASST) are Cytoplasmic-facing. A helical transmembrane segment spans residues 331–351 (LGIAQVCGSSLWIWLAAVVGI). Residues 352–355 (GAWN) are Periplasmic-facing. A helical membrane pass occupies residues 356 to 376 (MLIGILIACSIVSLLLIMFVA). Residues 377-391 (PGRPVAAHEEIHHHA) lie on the Cytoplasmic side of the membrane.

The protein belongs to the major facilitator superfamily. DHA1 family. MdtL (TC 2.A.1.2.22) subfamily.

The protein localises to the cell inner membrane. Confers resistance to chloramphenicol. This chain is Multidrug resistance protein MdtL, found in Escherichia coli O6:K15:H31 (strain 536 / UPEC).